The primary structure comprises 45 residues: Cytochrome b559 subunit beta (45 aa).

The chain crosses the membrane as a helical span at residues 20–36 (WLALHTLGIPTVFFLGA). Position 24 (H24) interacts with heme.

This sequence belongs to the PsbE/PsbF family. Heterodimer of an alpha subunit and a beta subunit. PSII is composed of 1 copy each of membrane proteins PsbA, PsbB, PsbC, PsbD, PsbE, PsbF, PsbH, PsbI, PsbJ, PsbK, PsbL, PsbM, PsbT, PsbX, PsbY, PsbZ, Psb30/Ycf12, peripheral proteins PsbO, CyanoQ (PsbQ), PsbU, PsbV and a large number of cofactors. It forms dimeric complexes. The cofactor is heme b.

It localises to the cellular thylakoid membrane. Functionally, this b-type cytochrome is tightly associated with the reaction center of photosystem II (PSII). PSII is a light-driven water:plastoquinone oxidoreductase that uses light energy to abstract electrons from H(2)O, generating O(2) and a proton gradient subsequently used for ATP formation. It consists of a core antenna complex that captures photons, and an electron transfer chain that converts photonic excitation into a charge separation. The chain is Cytochrome b559 subunit beta from Synechococcus sp. (strain CC9902).